We begin with the raw amino-acid sequence, 611 residues long: Immunoglobulin superfamily member 8 (611 aa).

An N-terminal signal peptide occupies residues 1-25; sequence MGVPSPTPLSSLLLLLLILGTRCYA. Ig-like C2-type domains lie at 26–143, 160–284, 301–422, and 429–554; these read RQVH…AKVE, PRGR…WVQV, SQLA…EAAS, and PVHV…ADYS. Residues 26-577 lie on the Extracellular side of the membrane; sequence RQVHVPRGPL…VYPYTHAVDT (552 aa). Cys-47 and Cys-125 form a disulfide bridge. Asn-48 and Asn-137 each carry an N-linked (GlcNAc...) asparagine glycan. Cys-184 and Cys-268 are disulfide-bonded. The EWI motif motif lies at 272-274; the sequence is EWI. Disulfide bonds link Cys-324/Cys-404 and Cys-460/Cys-542. N-linked (GlcNAc...) asparagine glycosylation is present at Asn-325. At Ser-516 the chain carries Phosphoserine. Residues 578–598 form a helical membrane-spanning segment; the sequence is LFVPLLVGTGVALVTGASVLA. The Cytoplasmic segment spans residues 599–611; the sequence is TITCCFMKRMRKR. Residues Cys-602 and Cys-603 are each lipidated (S-palmitoyl cysteine).

In terms of assembly, interacts directly with CD82 and CD9/tetraspanin-29. Also interacts with integrin alpha-3/beta-1 and integrin alpha-4/beta-1. Part of a complex composed of CD9, PTGFRN and CD81. Interacts with CD81/tetraspanin-28. In terms of tissue distribution, expressed in lymphocytes as well as in many tissues with higher expression in brain. Detected in all regions of the brain with weak expression in the pituitary. Expressed selectively by neurons but not by glial cells. Expressed in myoblasts (at protein level).

Its subcellular location is the cell membrane. Its function is as follows. Member of the immunoglobulin superfamily (IgSF) that links tetraspanin-enriched microdomains to the actin cytoskeleton and plays several important roles in innate and adaptive immunity. Acts as an inducible receptor of HSPA8 on dendritic cells to enhance the CCL21/SLC-dependent migration of activated mature dendritic cells while attenuating their antigen-specific stimulatory capacities. In complex with alpha-actinins ACTN1 and ACTN4, regulates actin dynamics in the immune synapse and subsequent T-cell activation. Inhibits the entry of several viruses such as hepatitis C Virus (HCV) or HIV-1. Mechanistically, promotes a change in CD81 organization at the plasma membrane by significantly restricting its diffusion which in turn influences CD81 interaction with Claudin-1/CLDN1, preventing CLDN1 from acting as a co-receptor required for HCV entry. Accumulates at the presynaptic terminal, the producer cell side of the virological synapse, to prevent HIV-1 Env-mediated cell-cell fusion. Highly expressed on malignant cells with antigen presentation defects, interacts with NK receptor KLRA9 to suppress NK-cell cytotoxicity. May participate in the regulation of neurite outgrowth and maintenance of the neural network in the adult brain. The protein is Immunoglobulin superfamily member 8 (Igsf8) of Mus musculus (Mouse).